A 62-amino-acid chain; its full sequence is UPF0291 protein CLJ_B2839 (62 aa).

This sequence belongs to the UPF0291 family.

The protein resides in the cytoplasm. The protein is UPF0291 protein CLJ_B2839 of Clostridium botulinum (strain 657 / Type Ba4).